A 316-amino-acid polypeptide reads, in one-letter code: Ribonuclease Z (316 aa).

The Zn(2+) site is built by H59, H61, D63, H64, H135, D203, and H261. D63 (proton acceptor) is an active-site residue.

The protein belongs to the RNase Z family. Homodimer. Zn(2+) is required as a cofactor.

It catalyses the reaction Endonucleolytic cleavage of RNA, removing extra 3' nucleotides from tRNA precursor, generating 3' termini of tRNAs. A 3'-hydroxy group is left at the tRNA terminus and a 5'-phosphoryl group is left at the trailer molecule.. Zinc phosphodiesterase, which displays some tRNA 3'-processing endonuclease activity. Probably involved in tRNA maturation, by removing a 3'-trailer from precursor tRNA. This chain is Ribonuclease Z, found in Nanoarchaeum equitans (strain Kin4-M).